The chain runs to 393 residues: Epoxyqueuosine reductase (393 aa).

The active-site Proton donor is Asp-154. The region spanning 196 to 228 is the 4Fe-4S ferredoxin-type domain; sequence LPLPVDIPVQEGCHSCVACITSCPTGAIVEPYT. [4Fe-4S] cluster-binding residues include Cys-208, Cys-211, Cys-214, Cys-218, Cys-234, Cys-261, Cys-264, and Cys-268.

It belongs to the QueG family. Monomer. Requires cob(II)alamin as cofactor. It depends on [4Fe-4S] cluster as a cofactor.

Its subcellular location is the cytoplasm. The catalysed reaction is epoxyqueuosine(34) in tRNA + AH2 = queuosine(34) in tRNA + A + H2O. It functions in the pathway tRNA modification; tRNA-queuosine biosynthesis. Its function is as follows. Catalyzes the conversion of epoxyqueuosine (oQ) to queuosine (Q), which is a hypermodified base found in the wobble positions of tRNA(Asp), tRNA(Asn), tRNA(His) and tRNA(Tyr). In Shewanella oneidensis (strain ATCC 700550 / JCM 31522 / CIP 106686 / LMG 19005 / NCIMB 14063 / MR-1), this protein is Epoxyqueuosine reductase.